A 378-amino-acid polypeptide reads, in one-letter code: S-(hydroxymethyl)glutathione dehydrogenase (378 aa).

7 residues coordinate Zn(2+): C49, H71, C101, C104, C107, C115, and C178.

Belongs to the zinc-containing alcohol dehydrogenase family. Class-III subfamily. In terms of assembly, homodimer. It depends on Zn(2+) as a cofactor.

It is found in the cytoplasm. It carries out the reaction S-(hydroxymethyl)glutathione + NADP(+) = S-formylglutathione + NADPH + H(+). The catalysed reaction is S-(hydroxymethyl)glutathione + NAD(+) = S-formylglutathione + NADH + H(+). It catalyses the reaction a primary alcohol + NAD(+) = an aldehyde + NADH + H(+). The enzyme catalyses a secondary alcohol + NAD(+) = a ketone + NADH + H(+). It carries out the reaction S-nitrosoglutathione + NADH + H(+) = S-(hydroxysulfenamide)glutathione + NAD(+). Its function is as follows. Has high formaldehyde dehydrogenase activity in the presence of glutathione and catalyzes the oxidation of normal alcohols in a reaction that is not GSH-dependent. In addition, hemithiolacetals other than those formed from GSH, including omega-thiol fatty acids, also are substrates. Also acts as a S-nitroso-glutathione reductase by catalyzing the NADH-dependent reduction of S-nitrosoglutathione. The polypeptide is S-(hydroxymethyl)glutathione dehydrogenase (frmA) (Haemophilus influenzae (strain ATCC 51907 / DSM 11121 / KW20 / Rd)).